The primary structure comprises 152 residues: MTNQSYYETMYILRPDIAEDEVTNHIDKYNKLLEEFGGTILDSQMRGKRRLAYQIAKHREGIYVQLSHQGDGQHIFKIEKAMRISEDVIRYMTVKQEGPLPTPKPSNKSSTQSENKDNPETKVESKEEQSVTNSDTSTTKKDDNEIKENTES.

Residues 94–152 (VKQEGPLPTPKPSNKSSTQSENKDNPETKVESKEEQSVTNSDTSTTKKDDNEIKENTES) are disordered. Basic and acidic residues-rich tracts occupy residues 114–129 (ENKDNPETKVESKEEQ) and 138–152 (TTKKDDNEIKENTES).

This sequence belongs to the bacterial ribosomal protein bS6 family.

Functionally, binds together with bS18 to 16S ribosomal RNA. This chain is Small ribosomal subunit protein bS6, found in Prochlorococcus marinus (strain MIT 9312).